The primary structure comprises 513 residues: GMP synthase [glutamine-hydrolyzing] (513 aa).

In terms of domain architecture, Glutamine amidotransferase type-1 spans leucine 5–aspartate 195. The active-site Nucleophile is cysteine 82. Residues histidine 169 and glutamate 171 contribute to the active site. A GMPS ATP-PPase domain is found at tryptophan 196 to arginine 388. Serine 223–serine 229 is a binding site for ATP.

As to quaternary structure, homodimer.

The catalysed reaction is XMP + L-glutamine + ATP + H2O = GMP + L-glutamate + AMP + diphosphate + 2 H(+). It participates in purine metabolism; GMP biosynthesis; GMP from XMP (L-Gln route): step 1/1. Its function is as follows. Catalyzes the synthesis of GMP from XMP. The protein is GMP synthase [glutamine-hydrolyzing] of Clostridium botulinum (strain Alaska E43 / Type E3).